A 279-amino-acid polypeptide reads, in one-letter code: Pantothenate synthetase (279 aa).

26–33 (MGNLHDGH) provides a ligand contact to ATP. Residue H33 is the Proton donor of the active site. Q57 is a binding site for (R)-pantoate. Q57 provides a ligand contact to beta-alanine. Residue 144-147 (GKKD) coordinates ATP. Position 150 (Q150) interacts with (R)-pantoate. Residues V173 and 181–184 (LSSR) contribute to the ATP site.

It belongs to the pantothenate synthetase family. As to quaternary structure, homodimer.

It is found in the cytoplasm. The catalysed reaction is (R)-pantoate + beta-alanine + ATP = (R)-pantothenate + AMP + diphosphate + H(+). It functions in the pathway cofactor biosynthesis; (R)-pantothenate biosynthesis; (R)-pantothenate from (R)-pantoate and beta-alanine: step 1/1. Its function is as follows. Catalyzes the condensation of pantoate with beta-alanine in an ATP-dependent reaction via a pantoyl-adenylate intermediate. This is Pantothenate synthetase from Burkholderia mallei (strain NCTC 10229).